A 150-amino-acid polypeptide reads, in one-letter code: 3-hydroxyacyl-[acyl-carrier-protein] dehydratase FabZ (150 aa).

H51 is a catalytic residue.

This sequence belongs to the thioester dehydratase family. FabZ subfamily.

It is found in the cytoplasm. The catalysed reaction is a (3R)-hydroxyacyl-[ACP] = a (2E)-enoyl-[ACP] + H2O. Its function is as follows. Involved in unsaturated fatty acids biosynthesis. Catalyzes the dehydration of short chain beta-hydroxyacyl-ACPs and long chain saturated and unsaturated beta-hydroxyacyl-ACPs. The polypeptide is 3-hydroxyacyl-[acyl-carrier-protein] dehydratase FabZ (Rubrobacter xylanophilus (strain DSM 9941 / JCM 11954 / NBRC 16129 / PRD-1)).